Reading from the N-terminus, the 347-residue chain is Phenylalanine--tRNA ligase alpha subunit (347 aa).

E265 is a binding site for Mg(2+).

This sequence belongs to the class-II aminoacyl-tRNA synthetase family. Phe-tRNA synthetase alpha subunit type 1 subfamily. Tetramer of two alpha and two beta subunits. It depends on Mg(2+) as a cofactor.

The protein localises to the cytoplasm. The catalysed reaction is tRNA(Phe) + L-phenylalanine + ATP = L-phenylalanyl-tRNA(Phe) + AMP + diphosphate + H(+). The polypeptide is Phenylalanine--tRNA ligase alpha subunit (Mycolicibacterium paratuberculosis (strain ATCC BAA-968 / K-10) (Mycobacterium paratuberculosis)).